A 114-amino-acid polypeptide reads, in one-letter code: MLLKSTTRHIHIYTAEVENNELIPSESVLTLDVDPDNELVWSEDALQRVYAKFDELVETYSGEDLTDYNLRRIGSDLEHYVRSLLQKGIVGYNLSSRVRNFSMGLPQVIASESK.

It belongs to the complex I NdhM subunit family. In terms of assembly, NDH-1 can be composed of about 15 different subunits; different subcomplexes with different compositions have been identified which probably have different functions.

It localises to the cellular thylakoid membrane. It carries out the reaction a plastoquinone + NADH + (n+1) H(+)(in) = a plastoquinol + NAD(+) + n H(+)(out). The catalysed reaction is a plastoquinone + NADPH + (n+1) H(+)(in) = a plastoquinol + NADP(+) + n H(+)(out). NDH-1 shuttles electrons from an unknown electron donor, via FMN and iron-sulfur (Fe-S) centers, to quinones in the respiratory and/or the photosynthetic chain. The immediate electron acceptor for the enzyme in this species is believed to be plastoquinone. Couples the redox reaction to proton translocation, and thus conserves the redox energy in a proton gradient. Cyanobacterial NDH-1 also plays a role in inorganic carbon-concentration. The protein is NAD(P)H-quinone oxidoreductase subunit M of Acaryochloris marina (strain MBIC 11017).